A 414-amino-acid chain; its full sequence is uncharacterized protein (414 aa).

In terms of domain architecture, Nop spans 246–360 (EAPNITKLAG…LNKRVEEIRR (115 aa)). Residues 358-414 (IRRKYPKPPKKKKKEKPKAKKKEKKGKKEKSKKKKDKKKDKKGKKERKVIGKTKSRK) are disordered. Residues 361-414 (KYPKPPKKKKKEKPKAKKKEKKGKKEKSKKKKDKKKDKKGKKERKVIGKTKSRK) show a composition bias toward basic residues.

It belongs to the NOP5/NOP56 family.

This is an uncharacterized protein from Methanocaldococcus jannaschii (strain ATCC 43067 / DSM 2661 / JAL-1 / JCM 10045 / NBRC 100440) (Methanococcus jannaschii).